We begin with the raw amino-acid sequence, 323 residues long: Beta-ketoacyl-[acyl-carrier-protein] synthase III (323 aa).

Active-site residues include Cys-113 and His-250. The tract at residues 251–255 (QANKR) is ACP-binding. Asn-280 is a catalytic residue.

It belongs to the thiolase-like superfamily. FabH family. As to quaternary structure, homodimer.

Its subcellular location is the cytoplasm. The enzyme catalyses malonyl-[ACP] + acetyl-CoA + H(+) = 3-oxobutanoyl-[ACP] + CO2 + CoA. It participates in lipid metabolism; fatty acid biosynthesis. Its function is as follows. Catalyzes the condensation reaction of fatty acid synthesis by the addition to an acyl acceptor of two carbons from malonyl-ACP. Catalyzes the first condensation reaction which initiates fatty acid synthesis and may therefore play a role in governing the total rate of fatty acid production. Possesses both acetoacetyl-ACP synthase and acetyl transacylase activities. Its substrate specificity determines the biosynthesis of branched-chain and/or straight-chain of fatty acids. The chain is Beta-ketoacyl-[acyl-carrier-protein] synthase III from Brucella abortus biovar 1 (strain 9-941).